The following is a 145-amino-acid chain: Large ribosomal subunit protein uL13 (145 aa).

Belongs to the universal ribosomal protein uL13 family. As to quaternary structure, part of the 50S ribosomal subunit.

In terms of biological role, this protein is one of the early assembly proteins of the 50S ribosomal subunit, although it is not seen to bind rRNA by itself. It is important during the early stages of 50S assembly. The protein is Large ribosomal subunit protein uL13 of Exiguobacterium sibiricum (strain DSM 17290 / CCUG 55495 / CIP 109462 / JCM 13490 / 255-15).